The chain runs to 95 residues: MSTEARDTIFIGKKPLMAYVTSTLIQLANIPSVNIKARGLSIGRAVDVAQIIARKTENAGYSIGEIKIGSESLESQDGRTRNVSTIEIEVKRNQA.

Position 13 is an N6-acetyllysine (lysine 13).

It belongs to the histone-like Alba family. Post-translationally, acetylated. Acetylation at Lys-13 decreases DNA-binding affinity.

Its subcellular location is the cytoplasm. It localises to the chromosome. Binds double-stranded DNA tightly but without sequence specificity. Involved in DNA compaction. In Nitrosopumilus maritimus (strain SCM1), this protein is DNA/RNA-binding protein Alba.